The primary structure comprises 2407 residues: Daf-12-interacting protein 1 (2407 aa).

Residues 90–112 show a composition bias toward low complexity; sequence QNSSMASMSSTPSSGQSSSPRNA. The disordered stretch occupies residues 90–152; it reads QNSSMASMSS…PHLSVQSQQR (63 aa). Residues 277 to 335 enclose the RRM domain; the sequence is CSVHVPHLDRHSPDHYRRRFESYGQVIDVDMVKSNDNKAFAVVQFTNIDDAQKALQDTN. 11 disordered regions span residues 439 to 632, 737 to 767, 785 to 849, 874 to 896, 921 to 986, 993 to 1012, 1025 to 1844, 1858 to 1918, 1932 to 1976, 2077 to 2103, and 2172 to 2200; these read EVAA…LELD, ATDS…TNRL, LCIG…GRPA, PTHD…ETMV, LIAA…PSNA, RSQS…TPVV, SNQP…EDSE, IAQE…VNNH, LQPA…QQSD, EENE…LAAA, and SIQR…VNQN. Residues 443-456 are compositionally biased toward polar residues; it reads RSSSPTSKSENDQG. Residues 512-529 show a composition bias toward acidic residues; the sequence is EDSDEQNDVDEEDDEDVV. 3 stretches are compositionally biased toward basic and acidic residues: residues 530 to 541, 548 to 564, and 573 to 586; these read SEEKRHEPEEGK, GHRD…DSSE, and SHHE…KDSE. Residues 587–603 show a composition bias toward polar residues; the sequence is AYQSRSFSPLNYQSQSP. The segment covering 618 to 627 has biased composition (low complexity); that stretch reads SPTTSSASSS. 2 stretches are compositionally biased toward polar residues: residues 791–826 and 837–849; these read TPST…TPRS and SRHN…GRPA. Positions 924 to 946 are enriched in polar residues; that stretch reads ATSTGTHSVSSSAHSTPRHSISG. Residues 966-978 show a composition bias toward basic and acidic residues; sequence SRPEKVQIRHDTI. The span at 1043–1052 shows a compositional bias: polar residues; the sequence is SALQNIQNHQ. Low complexity predominate over residues 1053 to 1070; that stretch reads PPHSNANSTPSTPSTSTH. The span at 1086–1153 shows a compositional bias: basic and acidic residues; it reads KEKEEREREA…KVRKKAEKEK (68 aa). Positions 1165–1177 are enriched in acidic residues; that stretch reads SDESDSDSNDELD. 6 stretches are compositionally biased toward basic and acidic residues: residues 1178 to 1195, 1218 to 1227, 1279 to 1293, 1304 to 1320, 1335 to 1355, and 1376 to 1398; these read LDVR…KDHQ, RAHDSFEKMQ, ADQR…EKGE, NDAG…DREN, QGER…DAAA, and RRSS…PHED. Low complexity-rich tracts occupy residues 1456–1471 and 1488–1498; these read PKHL…TKRS and TTSSTSTATTS. A compositionally biased stretch (polar residues) spans 1534–1547; sequence SMNSAADSPMSTTG. The segment covering 1570–1595 has biased composition (low complexity); the sequence is SSSGQHDSSSGSSSDSSSSDGSTSSD. Basic and acidic residues-rich tracts occupy residues 1679–1691 and 1703–1726; these read SEEH…HGDS and EHQE…HEEQ. Over residues 1749–1770 the composition is skewed to polar residues; sequence TQAQEKSAHTLISDQETDQAVQ. The segment covering 1792–1805 has biased composition (basic and acidic residues); that stretch reads NEKEVSGKDPHNIK. Over residues 1809-1826 the composition is skewed to polar residues; that stretch reads PLNNGHTDLLFSPSSSAH. 2 stretches are compositionally biased toward basic and acidic residues: residues 1827–1836 and 1873–1892; these read ASEKQSTKSE and EEVK…KMEE. 2 stretches are compositionally biased toward polar residues: residues 1895–1911 and 1932–1942; these read EQTP…SQDT and LQPASQHQVAQ. Low complexity predominate over residues 1962 to 1975; the sequence is SQQSQPSPMSSQQS. Residues 2049–2110 are a coiled coil; sequence NQMMQAKMKQ…AAATAAATMA (62 aa). Positions 2077–2099 are enriched in basic and acidic residues; the sequence is EENERKVEEDRREKQRKEEERQR. The segment covering 2176 to 2186 has biased composition (low complexity); sequence PSSTASTSSNP. Residues 2213–2383 enclose the SPOC domain; it reads QRWFYKHFPM…TRYLLIVFTN (171 aa).

Isoform d interacts with daf-12. Isoform d is widely expressed: detected in the hypodermis, seam cells, intestine, somatic gonad, neurons, vulval precursors, body wall muscle and pharynx.

It localises to the nucleus. Functionally, probable transcriptional corepressor which modulates activity of the nuclear hormone receptor daf-12 to regulate the dauer diapause. This Caenorhabditis elegans protein is Daf-12-interacting protein 1.